A 171-amino-acid chain; its full sequence is Photosystem I assembly protein Ycf3 (171 aa).

TPR repeat units lie at residues 35–68 (AFTY…EVDA), 72–105 (SYIL…NPYL), and 120–153 (GEQA…APTN).

Belongs to the Ycf3 family.

It localises to the plastid. The protein localises to the chloroplast thylakoid membrane. Functionally, essential for the assembly of the photosystem I (PSI) complex. May act as a chaperone-like factor to guide the assembly of the PSI subunits. The sequence is that of Photosystem I assembly protein Ycf3 from Nephroselmis olivacea (Green alga).